Consider the following 347-residue polypeptide: tRNA N6-adenosine threonylcarbamoyltransferase (347 aa).

H113 and H117 together coordinate Fe cation. Substrate contacts are provided by residues 136-140, D170, G183, D187, and N282; that span reads IVSGG. Position 310 (D310) interacts with Fe cation.

The protein belongs to the KAE1 / TsaD family. Requires Fe(2+) as cofactor.

It localises to the cytoplasm. It carries out the reaction L-threonylcarbamoyladenylate + adenosine(37) in tRNA = N(6)-L-threonylcarbamoyladenosine(37) in tRNA + AMP + H(+). Required for the formation of a threonylcarbamoyl group on adenosine at position 37 (t(6)A37) in tRNAs that read codons beginning with adenine. Is involved in the transfer of the threonylcarbamoyl moiety of threonylcarbamoyl-AMP (TC-AMP) to the N6 group of A37, together with TsaE and TsaB. TsaD likely plays a direct catalytic role in this reaction. The chain is tRNA N6-adenosine threonylcarbamoyltransferase from Bifidobacterium longum (strain NCC 2705).